The sequence spans 514 residues: Alanine--glyoxylate aminotransferase 2, mitochondrial (514 aa).

The transit peptide at 1–41 (MTLIWRHLLRPLCLVTSAPRILEMHPFLSLGTSRTSVTKLS) directs the protein to the mitochondrion. Position 71 is an N6-acetyllysine; alternate (Lys-71). The residue at position 71 (Lys-71) is an N6-succinyllysine; alternate. An N6-acetyllysine modification is found at Lys-84. Lys-262 is modified (N6-acetyllysine; alternate). An N6-succinyllysine; alternate modification is found at Lys-262. Position 304 is an N6-succinyllysine (Lys-304). An N6-(pyridoxal phosphate)lysine modification is found at Lys-350. N6-acetyllysine; alternate occurs at positions 417 and 420. N6-succinyllysine; alternate occurs at positions 417 and 420.

The protein belongs to the class-III pyridoxal-phosphate-dependent aminotransferase family. In terms of assembly, homotetramer. It depends on pyridoxal 5'-phosphate as a cofactor. As to expression, expressed in the convoluted tubule in the kidney and in the liver hepatocytes (at protein level).

The protein localises to the mitochondrion. The enzyme catalyses glyoxylate + L-alanine = glycine + pyruvate. The catalysed reaction is (R)-3-amino-2-methylpropanoate + pyruvate = 2-methyl-3-oxopropanoate + L-alanine. It catalyses the reaction 3-oxopropanoate + L-alanine = beta-alanine + pyruvate. It carries out the reaction 2-oxobutanoate + L-alanine = (2S)-2-aminobutanoate + pyruvate. The enzyme catalyses N(omega),N(omega)-dimethyl-L-arginine + pyruvate = 5-(3,3-dimethylguanidino)-2-oxopentanoate + L-alanine. The catalysed reaction is N(omega),N('omega)-dimethyl-L-arginine + pyruvate = 5-(3,3'-dimethylguanidino)-2-oxopentanoate + L-alanine. It catalyses the reaction N(omega),N(omega)-dimethyl-L-arginine + glyoxylate = 5-(3,3-dimethylguanidino)-2-oxopentanoate + glycine. It carries out the reaction N(omega),N('omega)-dimethyl-L-arginine + glyoxylate = 5-(3,3'-dimethylguanidino)-2-oxopentanoate + glycine. The enzyme catalyses N(omega)-methyl-L-arginine + pyruvate = 5-(3-methylguanidino)-2-oxopentanoate + L-alanine. The catalysed reaction is N(omega)-methyl-L-arginine + glyoxylate = 5-(3-methylguanidino)-2-oxopentanoate + glycine. It catalyses the reaction L-ornithine + pyruvate = 5-amino-2-oxopentanoate + L-alanine. It carries out the reaction L-ornithine + glyoxylate = 5-amino-2-oxopentanoate + glycine. The enzyme catalyses (2S)-2-aminobutanoate + glyoxylate = 2-oxobutanoate + glycine. The catalysed reaction is N(omega),N(omega)-dimethyl-L-arginine + oxaloacetate = 5-(3,3-dimethylguanidino)-2-oxopentanoate + L-aspartate. It catalyses the reaction oxaloacetate + L-alanine = L-aspartate + pyruvate. It carries out the reaction N(omega),N(omega)-dimethyl-L-arginine + 2-oxobutanoate = 5-(3,3-dimethylguanidino)-2-oxopentanoate + (2S)-2-aminobutanoate. The enzyme catalyses 2-oxopentanoate + N(omega),N(omega)-dimethyl-L-arginine = 5-(3,3-dimethylguanidino)-2-oxopentanoate + L-2-aminopentanoate. The catalysed reaction is 2-oxohexanoate + N(omega),N(omega)-dimethyl-L-arginine = L-2-aminohexanoate + 5-(3,3-dimethylguanidino)-2-oxopentanoate. Functionally, multifunctional aminotransferase with a broad substrate specificity. Catalyzes the conversion of glyoxylate to glycine using alanine as the amino donor. Catalyzes metabolism of not L- but the D-isomer of D-beta-aminoisobutyric acid to generate 2-methyl-3-oxopropanoate and alanine. Catalyzes the transfer of the amino group from beta-alanine to pyruvate to yield L-alanine and 3-oxopropanoate. Can metabolize NG-monomethyl-L-arginine (NMMA), asymmetric NG,NG-dimethyl-L-arginine (ADMA) and symmetric NG,N'G-dimethyl-L-arginine (SDMA). ADMA is a potent inhibitor of nitric-oxide (NO) synthase, and this activity provides mechanism through which the kidney regulates blood pressure. This chain is Alanine--glyoxylate aminotransferase 2, mitochondrial (AGXT2), found in Homo sapiens (Human).